A 314-amino-acid polypeptide reads, in one-letter code: Taste receptor type 2 member 42 (314 aa).

The Extracellular segment spans residues 1–7; it reads MATELDK. Residues 8 to 28 traverse the membrane as a helical segment; sequence IFLILEIAEFIIGMLGNVFIG. Residues 29–50 lie on the Cytoplasmic side of the membrane; it reads LVNCSEGIKNQKVFSADFILTC. Residues 51-71 form a helical membrane-spanning segment; sequence LAISTIGQLFVILFDSFLVGL. Residues 72–101 are Extracellular-facing; sequence ASHLYTTYRLGKPVIMLWHMTNHLTTWLAT. A helical membrane pass occupies residues 102 to 122; that stretch reads CLSIFYFFKIAHFPHSLFLWL. The Cytoplasmic segment spans residues 123–127; that stretch reads RWRMN. A helical membrane pass occupies residues 128-148; it reads GMIVMLLILSLFLLIFDSLVL. The Extracellular portion of the chain corresponds to 149-187; sequence EIFIDISLNIIDKSNLTLYLDESKTLYDKLSILKTLLSL. The N-linked (GlcNAc...) asparagine glycan is linked to asparagine 163. The helical transmembrane segment at 188 to 208 threads the bilayer; sequence TSFIPFSLSLTSLLFFFLSLV. Residues 209–238 are Cytoplasmic-facing; that stretch reads RHTRNLKLSSLGSRDSSTEAHRRAMKMVMS. Residues 239-259 traverse the membrane as a helical segment; that stretch reads FLFLFIVHFFSLQVANWIFFM. The Extracellular segment spans residues 260–265; it reads LWNNKY. The chain crosses the membrane as a helical span at residues 266–286; it reads IKFAMLALNAFPSCHSFILIL. Topologically, residues 287–314 are cytoplasmic; that stretch reads GNSKLRQTAVRLLWHLRNYTKTPNALPL.

It belongs to the G-protein coupled receptor T2R family.

The protein resides in the membrane. Functionally, receptor that may play a role in the perception of bitterness and is gustducin-linked. May play a role in sensing the chemical composition of the gastrointestinal content. The activity of this receptor may stimulate alpha gustducin, mediate PLC-beta-2 activation and lead to the gating of TRPM5. The chain is Taste receptor type 2 member 42 (TAS2R42) from Pan paniscus (Pygmy chimpanzee).